The following is a 73-amino-acid chain: MRIAVLLFAIFFFMSQVLPARGKFKEICERPNGSCRDFCLETEIHVGRCLNSQPCCLPLGHQPRIESTTPKKD.

A signal peptide spans 1–22; it reads MRIAVLLFAIFFFMSQVLPARG. Cystine bridges form between C28–C55, C35–C49, and C39–C56.

Belongs to the beta-defensin family. In terms of tissue distribution, specifically expressed in testis. Low expression is detected also in liver.

It is found in the secreted. Has antibacterial activity. This Homo sapiens (Human) protein is Beta-defensin 108B (DEFB108B).